The sequence spans 255 residues: Small ribosomal subunit protein uS2 (255 aa).

The interval 230 to 255 is disordered; the sequence is QSSSGRDLGASSEVPVEPALEEAAEG.

It belongs to the universal ribosomal protein uS2 family.

This Rhizobium leguminosarum bv. trifolii (strain WSM2304) protein is Small ribosomal subunit protein uS2.